We begin with the raw amino-acid sequence, 84 residues long: Small ribosomal subunit protein bS20 (84 aa).

Residues Lys-62–Ala-72 are compositionally biased toward basic residues. Positions Lys-62–Arg-84 are disordered. Polar residues predominate over residues Trp-75–Arg-84.

It belongs to the bacterial ribosomal protein bS20 family.

In terms of biological role, binds directly to 16S ribosomal RNA. In Mycoplasmoides gallisepticum (strain R(low / passage 15 / clone 2)) (Mycoplasma gallisepticum), this protein is Small ribosomal subunit protein bS20.